The sequence spans 93 residues: YcgL domain-containing protein KPK_1976 (93 aa).

The YcgL domain maps to Met1–Leu85.

The protein is YcgL domain-containing protein KPK_1976 of Klebsiella pneumoniae (strain 342).